A 1904-amino-acid polypeptide reads, in one-letter code: Voltage-dependent calcium channel type A subunit alpha-1 (1904 aa).

The interval 1 to 45 is disordered; sequence MLGGVGGRHMSTRRRGSSPLVRGGAGLTGYAGPGASGNSNDVAAI. The span at 23-35 shows a compositional bias: gly residues; it reads GGAGLTGYAGPGA. Residues 30–168 lie on the Cytoplasmic side of the membrane; sequence YAGPGASGNS…KHTRFIIEWP (139 aa). The I repeat unit spans residues 155 to 447; it reads NCIRKHTRFI…LVLGVLSGEF (293 aa). Residues 169 to 187 traverse the membrane as a helical segment; that stretch reads PFEYAVLLTIIANCVVLAL. The Extracellular segment spans residues 188–205; sequence EEHLPKQDKTILAQKLEA. The helical transmembrane segment at 206–225 threads the bilayer; sequence TEIYFLGIFCVEASLKILAL. At 226–237 the chain is on the cytoplasmic side; sequence GFVLHRGSYLRN. A helical membrane pass occupies residues 238-259; the sequence is IWNIMDFFVVVTGFITAFSQGI. The Extracellular segment spans residues 260 to 264; that stretch reads ELDMD. A helical membrane pass occupies residues 265-283; sequence LRTLRAIRVLRPLKLVSGI. Topologically, residues 284-302 are cytoplasmic; it reads PSLQVVLKSIIKAMAPLLQ. Residues 303–322 traverse the membrane as a helical segment; sequence IGLLVLFAIVIFAIIGLEFY. Topologically, residues 323–419 are extracellular; it reads SGTLHKTCYS…WTNDALGSTY (97 aa). Asn-353 and Asn-367 each carry an N-linked (GlcNAc...) asparagine glycan. A helical membrane pass occupies residues 420 to 444; sequence NWIYFIPLIVLGSFFMLNLVLGVLS. The Cytoplasmic portion of the chain corresponds to 445–568; sequence GEFAKEREKV…YWIRKSVKSQ (124 aa). The tract at residues 513–543 is disordered; sequence KKLGKSKSTDTEEEEGDDDQDDGELSSSTKE. Acidic residues predominate over residues 523–536; that stretch reads TEEEEGDDDQDDGE. One copy of the II repeat lies at 554-797; the sequence is EKRFRYWIRK…VFLAIAVDNL (244 aa). The chain crosses the membrane as a helical span at residues 569 to 587; sequence KFYWFVIVLVFFNTVCVAV. At 588-602 the chain is on the extracellular side; sequence EHYGQPQWLTDFLYF. Residues 603–622 traverse the membrane as a helical segment; it reads AEFVFLALFMLEMFIKVYAL. Residues 623–630 lie on the Cytoplasmic side of the membrane; that stretch reads GPRTYFDS. A helical transmembrane segment spans residues 631–649; sequence SFNRFDCVVISGSIFEVIW. The Extracellular segment spans residues 650–658; that stretch reads SEVKSGSFG. The helical transmembrane segment at 659 to 677 threads the bilayer; that stretch reads LSVLRALRLLRIFKVTKYW. At 678 to 696 the chain is on the cytoplasmic side; sequence KSLRNLVISLLSSMRSIIS. The chain crosses the membrane as a helical span at residues 697-716; sequence LLFLLFLFILIFALLGMQLF. At 717 to 769 the chain is on the extracellular side; sequence GGQFNFDSGTPPTNFNTFPIALLTVFQILTGEDWNEVMYQGIESQGGHKKGMI. The helical transmembrane segment at 770-794 threads the bilayer; the sequence is YSLYFIVLVLFGNYTLLNVFLAIAV. Topologically, residues 795–895 are cytoplasmic; it reads DNLANAQELS…VRRAAHWVVN (101 aa). Residues 827 to 869 form a disordered region; sequence QSLQNPKDGGAPKVEICPPNGKGGKQSSEEEKKQDEDDDTGPK. An III repeat occupies 890–1177; it reads AHWVVNLRYF…IITFQEQGEA (288 aa). Residues 896 to 914 form a helical membrane-spanning segment; that stretch reads LRYFDFFIMVVISLSSIAL. Topologically, residues 915-930 are extracellular; sequence AAEDPVWEDSPRNEVL. A helical membrane pass occupies residues 931–950; sequence NYFDYAFTGVFTVEMILKII. Over 951-962 the chain is Cytoplasmic; the sequence is DLGIILHPGSYL. The chain crosses the membrane as a helical span at residues 963–981; that stretch reads REFWNIMDAVVVICAAVSF. Topologically, residues 982 to 994 are extracellular; sequence AFDMTGSSAGQNL. Residue Asn-993 is glycosylated (N-linked (GlcNAc...) asparagine). The chain crosses the membrane as a helical span at residues 995–1013; it reads STIKSLRVLRVLRPLKTIK. Over 1014–1032 the chain is Cytoplasmic; that stretch reads RVPKLKAVFDCVVNSLKNV. The helical transmembrane segment at 1033–1052 threads the bilayer; the sequence is INILIVYILFQFIFAVIAVQ. Topologically, residues 1053–1141 are extracellular; the sequence is LFNGKFFYCS…EDKGPIQNFR (89 aa). The helical transmembrane segment at 1142-1166 threads the bilayer; sequence IEMSIFYIVYFIVFPFFFVNIFVAL. Over 1167-1221 the chain is Cytoplasmic; that stretch reads IIITFQEQGEAELQDGEIDKNQKSCIDFTIQARPLERYMPKERNSVKYKIWRIVV. The IV repeat unit spans residues 1214–1470; that stretch reads YKIWRIVVST…DNFDYLTRDS (257 aa). Residues 1222–1250 traverse the membrane as a helical segment; it reads STPFEYFIMGLIVLNTVLLMMKFHRQSDA. The Extracellular portion of the chain corresponds to 1251–1255; that stretch reads YKNTL. Residues 1256–1275 traverse the membrane as a helical segment; it reads KYMNMCFTGMFTVECILKIA. Topologically, residues 1276-1283 are cytoplasmic; that stretch reads AFGVRNFF. The helical transmembrane segment at 1284–1302 threads the bilayer; it reads KDAWNTFDFITVIGSIVDA. The Extracellular portion of the chain corresponds to 1303 to 1309; that stretch reads LVIEFGE. The helical transmembrane segment at 1310–1328 threads the bilayer; it reads NFINVGFLRLFRAARLIKL. The Cytoplasmic segment spans residues 1329 to 1347; sequence LRQGYTIRILLWTFVQSFK. The helical transmembrane segment at 1348–1367 threads the bilayer; it reads ALPYVCLLIAMLFFIYAIIG. At 1368–1431 the chain is on the extracellular side; that stretch reads MQVFGNIALD…AKAGKQEGGC (64 aa). The tract at residues 1430–1471 is phenylalkylamine binding; the sequence is GCGSNIAYAYFVSFIFFCSFLMLNLFVAVIMDNFDYLTRDSS. A helical transmembrane segment spans residues 1432 to 1456; that stretch reads GSNIAYAYFVSFIFFCSFLMLNLFV. Topologically, residues 1457–1904 are cytoplasmic; it reads AVIMDNFDYL…HSDSDEDDWC (448 aa). Residues 1476–1511 form the EF-hand domain; that stretch reads HHLDEFVRIWAEYDPNATGKIHYTEMYDMLKNMDPP. Ca(2+) contacts are provided by Asp-1489, Asn-1491, Thr-1493, Lys-1495, and Glu-1500. Disordered regions lie at residues 1652-1694, 1710-1788, and 1870-1904; these read THTG…HEGP, THHP…HSYP, and GGRL…DDWC. The span at 1670-1681 shows a compositional bias: low complexity; it reads RSPSLRHSPGRP. Over residues 1682–1691 the composition is skewed to basic and acidic residues; it reads GYDHHGHYYH. Basic residues predominate over residues 1710–1725; that stretch reads THHPHPSQYNHRHRMR. The span at 1727–1740 shows a compositional bias: low complexity; that stretch reads PWSASTSPARTPSP. A compositionally biased stretch (polar residues) spans 1751-1762; that stretch reads GTTSLEQRSRSP. The segment covering 1771 to 1784 has biased composition (basic residues); sequence PHTHQHYHRHHPHQ.

It belongs to the calcium channel alpha-1 subunit (TC 1.A.1.11) family. CACNA1I subfamily. As to quaternary structure, interacts with CATSPER1 and CATSPER2, leading to suppress T-type calcium channel activity.

The protein localises to the membrane. Voltage-sensitive calcium channels (VSCC) mediate the entry of calcium ions into excitable cells and are also involved in a variety of calcium-dependent processes, including muscle contraction, neurotransmitter release, gene expression, cell motility, cell division and cell death. This Apis mellifera (Honeybee) protein is Voltage-dependent calcium channel type A subunit alpha-1 (CAC).